A 161-amino-acid polypeptide reads, in one-letter code: Thy-1 membrane glycoprotein (161 aa).

A signal peptide spans 1 to 19 (MNLAISIALLLTVLQVSRG). Q20 is subject to Pyrrolidone carboxylic acid. The region spanning 20–126 (QKVTSLTACL…SQNVTVLRDK (107 aa)) is the Ig-like V-type domain. Intrachain disulfides connect C28-C130 and C38-C104. N-linked (GlcNAc...) asparagine glycosylation is found at N42 and N79. S82 carries the phosphoserine modification. A glycan (N-linked (GlcNAc...) asparagine) is linked at N119. C130 is lipidated: GPI-anchor amidated cysteine; alternate. Residues 131 to 161 (EGISLLAQNTSWLXLLLLSLSLLQATDFMSL) constitute a propeptide, removed in mature form. The N-linked (GlcNAc...) asparagine glycan is linked to N139.

It is found in the cell membrane. In terms of biological role, may play a role in cell-cell or cell-ligand interactions during synaptogenesis and other events in the brain. In Macaca mulatta (Rhesus macaque), this protein is Thy-1 membrane glycoprotein (THY1).